Here is a 104-residue protein sequence, read N- to C-terminus: Large ribosomal subunit protein bL21 (104 aa).

This sequence belongs to the bacterial ribosomal protein bL21 family. Part of the 50S ribosomal subunit. Contacts protein L20.

In terms of biological role, this protein binds to 23S rRNA in the presence of protein L20. The polypeptide is Large ribosomal subunit protein bL21 (Lactococcus lactis subsp. lactis (strain IL1403) (Streptococcus lactis)).